A 106-amino-acid polypeptide reads, in one-letter code: uncharacterized protein (106 aa).

The segment at 54–106 (RSTLVATSPRRRSLVQQRRPPLREQNGGSGSSCVSSGGSASTVKTPGSRRASK) is disordered. Low complexity predominate over residues 84 to 94 (SSCVSSGGSAS).

This is an uncharacterized protein from Human adenovirus C serotype 2 (HAdV-2).